The chain runs to 382 residues: Anhydro-N-acetylmuramic acid kinase (382 aa).

ATP is bound at residue 9–16 (GTSLDGID).

It belongs to the anhydro-N-acetylmuramic acid kinase family.

It carries out the reaction 1,6-anhydro-N-acetyl-beta-muramate + ATP + H2O = N-acetyl-D-muramate 6-phosphate + ADP + H(+). Its pathway is amino-sugar metabolism; 1,6-anhydro-N-acetylmuramate degradation. It functions in the pathway cell wall biogenesis; peptidoglycan recycling. Functionally, catalyzes the specific phosphorylation of 1,6-anhydro-N-acetylmuramic acid (anhMurNAc) with the simultaneous cleavage of the 1,6-anhydro ring, generating MurNAc-6-P. Is required for the utilization of anhMurNAc either imported from the medium or derived from its own cell wall murein, and thus plays a role in cell wall recycling. This Bacillus cereus (strain Q1) protein is Anhydro-N-acetylmuramic acid kinase.